The primary structure comprises 217 residues: Ras-related protein Rab-19 (217 aa).

GTP is bound by residues Ser-26, Val-28, Gly-29, Lys-30, Thr-31, Cys-32, Tyr-42, Ser-43, Glu-44, Ser-45, and Thr-49. Thr-31 lines the Mg(2+) pocket. Residues 39–54 (SGVYSESQQNTIGVDF) carry the Switch 1 motif. The Mg(2+) site is built by Thr-49 and Asp-72. The short motif at 74–89 (AGQERFRTITQSYYRS) is the Switch 2 element. GTP is bound by residues Gly-75, Asn-130, Lys-131, Asp-133, Ser-161, Ala-162, and Lys-163. S-geranylgeranyl cysteine attachment occurs at residues Cys-215 and Cys-217. A Cysteine methyl ester modification is found at Cys-217.

It belongs to the small GTPase superfamily. Rab family. Requires Mg(2+) as cofactor.

It localises to the cell membrane. It carries out the reaction GTP + H2O = GDP + phosphate + H(+). Its activity is regulated as follows. Regulated by guanine nucleotide exchange factors (GEFs) which promote the exchange of bound GDP for free GTP. Regulated by GTPase activating proteins (GAPs) which increase the GTP hydrolysis activity. Inhibited by GDP dissociation inhibitors (GDIs). Its function is as follows. The small GTPases Rab are key regulators of intracellular membrane trafficking, from the formation of transport vesicles to their fusion with membranes. Rabs cycle between an inactive GDP-bound form and an active GTP-bound form that is able to recruit to membranes different set of downstream effectors directly responsible for vesicle formation, movement, tethering and fusion. The sequence is that of Ras-related protein Rab-19 from Rattus norvegicus (Rat).